Here is a 511-residue protein sequence, read N- to C-terminus: Cytochrome P450 monooxygenase nodR (511 aa).

The helical transmembrane segment at Ile8–Ala28 threads the bilayer. N-linked (GlcNAc...) asparagine glycans are attached at residues Asn76 and Asn373. Cys452 is a binding site for heme.

The protein belongs to the cytochrome P450 family. Requires heme as cofactor.

The protein localises to the membrane. It functions in the pathway secondary metabolite biosynthesis. In terms of biological role, cytochrome P450 monooxygenase; part of the gene cluster that mediates the biosynthesis of the indole diterpenes nodulisporic acids (NA). Nodulisporic acid A (NAA) and its chemically modified derivatives are of particular significance because of their highly potent insecticidal activity against blood-feeding arthropods and lack of observable adverse effects on mammals, in particular the tremogenicity associated with the paspaline-derived IDTs is not observed. The geranylgeranyl diphosphate (GGPP) synthase ggs1, localized outside of the cluster, is proposed to catalyze the first step in nodulisporic acid biosynthesis via conversion of farnesyl pyrophosphate and isopentyl pyrophosphate into geranylgeranyl pyrophosphate (GGPP). Condensation of indole-3-glycerol phosphate with GGPP by the prenyl transferase nodC then forms 3-geranylgeranylindole (3-GGI). Epoxidation by the FAD-dependent monooxygenase nodM leads to a single-epoxidized-GGI that is substrate of the terpene cyclase nodB for cyclization to yield emindole SB. The terminal methyl carbon, C28, of emindole SB is then oxidized by the cytochrome P450 monooxygenase nodW to produce nodulisporic acid F (NAF), the pentacyclic core of NAA. NAF is converted to nodulisporic acid E (NAE) via prenylation. This step is probably performed by one of the indole diterpene prenyltransferases nodD1 or nodD2. Several oxidation steps performed by the FAD-linked oxidoreductase nodO and one of the cytochrome P450 monooxygenase nodR, nodX or nodZ further convert NAE to nodulisporic acid D (NAD). NAD is substrate of cytochrome P450 monooxygenase nodJ to produce the precursor of nodulisporic acid C (NAC), converted to NAC by one of the indole diterpene prenyltransferases nodD1 or nodD2. The FAD-dependent monooxygenase nodY2 then oxidizes NAC to nodulisporic acid B (NAB). Finally NAB is converted to NAA by one of the cytochrome P450 monooxygenases nodR, nodX or nodZ. The polypeptide is Cytochrome P450 monooxygenase nodR (Hypoxylon pulicicidum).